Reading from the N-terminus, the 87-residue chain is uncharacterized protein (87 aa).

The protein resides in the host cytoplasm. This is an uncharacterized protein from Escherichia phage Mu (Bacteriophage Mu).